Consider the following 194-residue polypeptide: tRNA (guanine-N(1)-)-methyltransferase (194 aa).

Residues Gly-78 and 97–102 each bind S-adenosyl-L-methionine; that span reads IGDYVL.

Belongs to the RNA methyltransferase TrmD family. In terms of assembly, homodimer.

Its subcellular location is the cytoplasm. It carries out the reaction guanosine(37) in tRNA + S-adenosyl-L-methionine = N(1)-methylguanosine(37) in tRNA + S-adenosyl-L-homocysteine + H(+). In terms of biological role, specifically methylates guanosine-37 in various tRNAs. This Mycoplasma mobile (strain ATCC 43663 / 163K / NCTC 11711) (Mesomycoplasma mobile) protein is tRNA (guanine-N(1)-)-methyltransferase.